Reading from the N-terminus, the 308-residue chain is Ribose 1,5-bisphosphate isomerase (308 aa).

Residues R24–G27 and R67 contribute to the substrate site. Residue C129 is the Proton acceptor of the active site. Catalysis depends on D198, which acts as the Proton donor. Residues N208 to K209 and K234 each bind substrate.

The protein belongs to the eIF-2B alpha/beta/delta subunits family. R15P isomerase subfamily.

The enzyme catalyses alpha-D-ribose 1,5-bisphosphate = D-ribulose 1,5-bisphosphate. Its function is as follows. Catalyzes the isomerization of ribose 1,5-bisphosphate (R15P) to ribulose 1,5-bisphosphate (RuBP), the CO(2) acceptor and substrate for RubisCO. Functions in an archaeal AMP degradation pathway, together with AMP phosphorylase and RubisCO. The chain is Ribose 1,5-bisphosphate isomerase from Methanocaldococcus jannaschii (strain ATCC 43067 / DSM 2661 / JAL-1 / JCM 10045 / NBRC 100440) (Methanococcus jannaschii).